A 139-amino-acid polypeptide reads, in one-letter code: Ribosomal RNA large subunit methyltransferase H (139 aa).

Residues leucine 56, glycine 88, and 107–112 each bind S-adenosyl-L-methionine; that span reads LSLMTF.

This sequence belongs to the RNA methyltransferase RlmH family. As to quaternary structure, homodimer.

The protein localises to the cytoplasm. The enzyme catalyses pseudouridine(1915) in 23S rRNA + S-adenosyl-L-methionine = N(3)-methylpseudouridine(1915) in 23S rRNA + S-adenosyl-L-homocysteine + H(+). In terms of biological role, specifically methylates the pseudouridine at position 1915 (m3Psi1915) in 23S rRNA. This chain is Ribosomal RNA large subunit methyltransferase H, found in Coprothermobacter proteolyticus (strain ATCC 35245 / DSM 5265 / OCM 4 / BT).